A 198-amino-acid chain; its full sequence is ATP synthase subunit b (198 aa).

The chain crosses the membrane as a helical span at residues 25-45; it reads PLSELLIGTLAFGLLVAFFFW.

This sequence belongs to the ATPase B chain family. As to quaternary structure, F-type ATPases have 2 components, F(1) - the catalytic core - and F(0) - the membrane proton channel. F(1) has five subunits: alpha(3), beta(3), gamma(1), delta(1), epsilon(1). F(0) has three main subunits: a(1), b(2) and c(10-14). The alpha and beta chains form an alternating ring which encloses part of the gamma chain. F(1) is attached to F(0) by a central stalk formed by the gamma and epsilon chains, while a peripheral stalk is formed by the delta and b chains.

It is found in the cell membrane. Functionally, f(1)F(0) ATP synthase produces ATP from ADP in the presence of a proton or sodium gradient. F-type ATPases consist of two structural domains, F(1) containing the extramembraneous catalytic core and F(0) containing the membrane proton channel, linked together by a central stalk and a peripheral stalk. During catalysis, ATP synthesis in the catalytic domain of F(1) is coupled via a rotary mechanism of the central stalk subunits to proton translocation. In terms of biological role, component of the F(0) channel, it forms part of the peripheral stalk, linking F(1) to F(0). The chain is ATP synthase subunit b from Frankia alni (strain DSM 45986 / CECT 9034 / ACN14a).